Reading from the N-terminus, the 635-residue chain is DNA-directed RNA polymerase III subunit rpc3 (635 aa).

3 disordered regions span residues 131–164 (PEQSHTNGVDKEHDEVDGDEEQPNGLSGDHSDQQ), 246–295 (VPRG…GYDT), and 386–424 (SGSIGPMEISQPDNRRGKRPLEDDVNGTNHEGANGLSSG). Over residues 272-292 (SVDEDDEQDEEENEWSDDEMG) the composition is skewed to acidic residues. The span at 398–407 (DNRRGKRPLE) shows a compositional bias: basic and acidic residues. Residues 411–424 (NGTNHEGANGLSSG) show a composition bias toward polar residues. A leucine-zipper region spans residues 562–583 (TYKAMSRCFQRLRFERNRLKEF).

This sequence belongs to the RNA polymerase beta chain family. As to quaternary structure, component of the RNA polymerase III (Pol III) complex consisting of 17 subunits.

It localises to the nucleus. In terms of biological role, DNA-dependent RNA polymerase catalyzes the transcription of DNA into RNA using the four ribonucleoside triphosphates as substrates. Specific core component of RNA polymerase III which synthesizes small RNAs, such as 5S rRNA and tRNAs. The sequence is that of DNA-directed RNA polymerase III subunit rpc3 (rpc82) from Aspergillus clavatus (strain ATCC 1007 / CBS 513.65 / DSM 816 / NCTC 3887 / NRRL 1 / QM 1276 / 107).